A 204-amino-acid polypeptide reads, in one-letter code: Imidazoleglycerol-phosphate dehydratase (204 aa).

This sequence belongs to the imidazoleglycerol-phosphate dehydratase family.

It is found in the cytoplasm. The catalysed reaction is D-erythro-1-(imidazol-4-yl)glycerol 3-phosphate = 3-(imidazol-4-yl)-2-oxopropyl phosphate + H2O. It functions in the pathway amino-acid biosynthesis; L-histidine biosynthesis; L-histidine from 5-phospho-alpha-D-ribose 1-diphosphate: step 6/9. The chain is Imidazoleglycerol-phosphate dehydratase from Albidiferax ferrireducens (strain ATCC BAA-621 / DSM 15236 / T118) (Rhodoferax ferrireducens).